We begin with the raw amino-acid sequence, 32 residues long: Beta-hexosaminidase (32 aa).

One can recognise a GH18 domain in the interval Gly-1 to Arg-32. Catalysis depends on Glu-21, which acts as the Proton donor.

It belongs to the glycosyl hydrolase 18 family. Chitinase class II subfamily.

The enzyme catalyses Hydrolysis of terminal non-reducing N-acetyl-D-hexosamine residues in N-acetyl-beta-D-hexosaminides.. With respect to regulation, activity is decreased by HgCl(2) and maltose. Activity is stimulated by Na(2)SeO(4), BaCl(2), MgCl(2), chondroitin 6-sulfate and phenylmethylsulfonyl fluoride. Functionally, preferentially hydrolyzes pNP-GlcNAc, hydrolyzes pNP-GalNAc to a lesser extent. The chain is Beta-hexosaminidase from Palythoa caribaeorum (White encrusting zoanthid coral).